Here is a 232-residue protein sequence, read N- to C-terminus: Histone H1B (232 aa).

Residues 1–18 (MSDPAVEVTPAVPVASPA) show a composition bias toward low complexity. Disordered stretches follow at residues 1–44 (MSDP…PPVS) and 99–232 (QTKG…AKKA). In terms of domain architecture, H15 spans 39-113 (THPPVSEMVV…GASGSFKLPA (75 aa)). Basic residues-rich tracts occupy residues 132 to 141 (KPKKAAAKPK), 147 to 173 (KVKK…KTTK), 181 to 197 (AAKK…KPKA), 205 to 214 (KRAAAPKAKK), and 222 to 232 (KAAKKPAAKKA).

It belongs to the histone H1/H5 family.

The protein localises to the nucleus. It is found in the chromosome. Histones H1 are necessary for the condensation of nucleosome chains into higher-order structures. In Chironomus tentans (Midge), this protein is Histone H1B.